We begin with the raw amino-acid sequence, 651 residues long: ATP-dependent RNA helicase MRH4, mitochondrial (651 aa).

A mitochondrion-targeting transit peptide spans 1 to 61; the sequence is MLRSSLGSVC…SNARQATRRE (61 aa). Residues 45–56 show a composition bias toward polar residues; that stretch reads SSLSFSTSNARQ. Residues 45–137 form a disordered region; the sequence is SSLSFSTSNA…GGKKLGRDGK (93 aa). 2 stretches are compositionally biased toward basic and acidic residues: residues 72–83 and 124–137; these read RVGRSTARDGDK and NGREGGKKLGRDGK. Residues 167 to 200 carry the Q motif motif; sequence DSFDQFDLLPQVKDAVLNEALKGMLDIKPTPVQR. Residues 210 to 241 form a disordered region; it reads TTGARSRWRTKSKPADSGSEAASPDAPPPPRE. Over residues 224–233 the composition is skewed to low complexity; it reads ADSGSEAASP. In terms of domain architecture, Helicase ATP-binding spans 234–445; it reads DAPPPPREEF…ASRFPNMRRI (212 aa). 247-254 contacts ATP; it reads AETGSGKT. Residues 392 to 395 carry the DEAD box motif; that stretch reads DEAD. The region spanning 494–651 is the Helicase C-terminal domain; that stretch reads PVKGQVDVRR…ESMFMGQALV (158 aa).

Belongs to the DEAD box helicase family. MRH4 subfamily.

The protein resides in the mitochondrion. The catalysed reaction is ATP + H2O = ADP + phosphate + H(+). Its function is as follows. ATP-binding RNA helicase involved in mitochondrial RNA metabolism. Required for maintenance of mitochondrial DNA. This is ATP-dependent RNA helicase MRH4, mitochondrial (MRH4) from Pyricularia oryzae (strain 70-15 / ATCC MYA-4617 / FGSC 8958) (Rice blast fungus).